A 361-amino-acid chain; its full sequence is Phosphoserine aminotransferase (361 aa).

Arg-43 is a binding site for L-glutamate. Pyridoxal 5'-phosphate contacts are provided by residues 77–78, Trp-103, Thr-153, Asp-173, and Gln-196; that span reads AS. Position 197 is an N6-(pyridoxal phosphate)lysine (Lys-197). 238–239 provides a ligand contact to pyridoxal 5'-phosphate; the sequence is NT.

The protein belongs to the class-V pyridoxal-phosphate-dependent aminotransferase family. SerC subfamily. As to quaternary structure, homodimer. Pyridoxal 5'-phosphate is required as a cofactor.

Its subcellular location is the cytoplasm. The catalysed reaction is O-phospho-L-serine + 2-oxoglutarate = 3-phosphooxypyruvate + L-glutamate. The enzyme catalyses 4-(phosphooxy)-L-threonine + 2-oxoglutarate = (R)-3-hydroxy-2-oxo-4-phosphooxybutanoate + L-glutamate. It participates in amino-acid biosynthesis; L-serine biosynthesis; L-serine from 3-phospho-D-glycerate: step 2/3. It functions in the pathway cofactor biosynthesis; pyridoxine 5'-phosphate biosynthesis; pyridoxine 5'-phosphate from D-erythrose 4-phosphate: step 3/5. Catalyzes the reversible conversion of 3-phosphohydroxypyruvate to phosphoserine and of 3-hydroxy-2-oxo-4-phosphonooxybutanoate to phosphohydroxythreonine. The protein is Phosphoserine aminotransferase of Pseudomonas putida (strain ATCC 47054 / DSM 6125 / CFBP 8728 / NCIMB 11950 / KT2440).